Here is a 221-residue protein sequence, read N- to C-terminus: MTAWLGASYVLPILLVSFVQTNAKPEKTKMDCYKDVKGTIYEYEALTLNGNERIQFKQYPRKHVLFVNVATYCGLTAQYPELNSLQEELKPLGLVVLGFPCNQFGKQGPGENSEILPGLKYVRPGRGYVPNFQLFEKGDVNGEKEQKVFTFLKLSCPHPSEVLGSFRHISWDPVKVHDIRWNFEKFLVGPDGVPVLRWFHRTPISTVKEDILVYLKQLKMK.

A signal peptide spans 1-21 (MTAWLGASYVLPILLVSFVQT). C73 is a catalytic residue.

The protein belongs to the glutathione peroxidase family. As to expression, epididymis.

It localises to the secreted. The enzyme catalyses 2 glutathione + H2O2 = glutathione disulfide + 2 H2O. In terms of biological role, protects cells and enzymes from oxidative damage, by catalyzing the reduction of hydrogen peroxide, lipid peroxides and organic hydroperoxide, by glutathione. May constitute a glutathione peroxidase-like protective system against peroxide damage in sperm membrane lipids. This chain is Epididymal secretory glutathione peroxidase (GPX5), found in Canis lupus familiaris (Dog).